The following is a 575-amino-acid chain: Alpha-(1,6)-fucosyltransferase (575 aa).

Topologically, residues Met1–Arg9 are cytoplasmic. The chain crosses the membrane as a helical; Signal-anchor for type II membrane protein span at residues Trp10–Val30. The Lumenal segment spans residues Arg31–Lys575. Cystine bridges form between Cys204–Cys266, Cys212–Cys230, and Cys218–Cys222. The region spanning Lys206 to Leu493 is the GT23 domain. Ser278 carries the phosphoserine modification. Residues Pro299 to Pro305 carry the SH3-binding motif. Residues Arg365 to Arg366 are important for donor substrate binding. Cys465 and Cys472 form a disulfide bridge. One can recognise an SH3 domain in the interval Gln502–Glu563.

The protein belongs to the glycosyltransferase 23 family. Post-translationally, tyrosine phosphorylated by PKDCC/VLK.

The protein resides in the golgi apparatus. The protein localises to the golgi stack membrane. The enzyme catalyses N(4)-{beta-D-GlcNAc-(1-&gt;2)-alpha-D-Man-(1-&gt;3)-[beta-D-GlcNAc-(1-&gt;2)-alpha-D-Man-(1-&gt;6)]-beta-D-Man-(1-&gt;4)-beta-D-GlcNAc-(1-&gt;4)-beta-D-GlcNAc}-L-asparaginyl-[protein] + GDP-beta-L-fucose = an N(4)-{beta-D-GlcNAc-(1-&gt;2)-alpha-D-Man-(1-&gt;3)-[beta-D-GlcNAc-(1-&gt;2)-alpha-D-Man-(1-&gt;6)]-beta-D-Man-(1-&gt;4)-beta-D-GlcNAc-(1-&gt;4)-[alpha-L-Fuc-(1-&gt;6)]-beta-D-GlcNAc}-L-asparaginyl-[protein] + GDP + H(+). It functions in the pathway protein modification; protein glycosylation. Catalyzes the addition of fucose in alpha 1-6 linkage to the first GlcNAc residue, next to the peptide chains in N-glycans. The polypeptide is Alpha-(1,6)-fucosyltransferase (FUT8) (Homo sapiens (Human)).